The following is a 137-amino-acid chain: Large ribosomal subunit protein uL16 (137 aa).

It belongs to the universal ribosomal protein uL16 family. In terms of assembly, part of the 50S ribosomal subunit.

In terms of biological role, binds 23S rRNA and is also seen to make contacts with the A and possibly P site tRNAs. The protein is Large ribosomal subunit protein uL16 of Wolbachia pipientis subsp. Culex pipiens (strain wPip).